A 75-amino-acid polypeptide reads, in one-letter code: DNA-directed RNA polymerase subunit omega (75 aa).

The protein belongs to the RNA polymerase subunit omega family. In cyanobacteria the RNAP catalytic core is composed of 2 alpha, 1 beta, 1 beta', 1 gamma and 1 omega subunit. When a sigma factor is associated with the core the holoenzyme is formed, which can initiate transcription.

It carries out the reaction RNA(n) + a ribonucleoside 5'-triphosphate = RNA(n+1) + diphosphate. Functionally, promotes RNA polymerase assembly. Latches the N- and C-terminal regions of the beta' subunit thereby facilitating its interaction with the beta and alpha subunits. In Microcystis aeruginosa (strain NIES-843 / IAM M-2473), this protein is DNA-directed RNA polymerase subunit omega.